A 217-amino-acid polypeptide reads, in one-letter code: Lipid transferase CIDEA (217 aa).

The CIDE-N domain occupies 33–110 (PARPFRVSNH…ILEKGQKWTP (78 aa)). The interval 163-180 (CTSFKAVLRNLLRFMSYA) is amphipathic helix.

The protein belongs to the CIDE family. As to quaternary structure, homodimer. Interacts with CIDEC. Directly interacts with CEBPB. Interacts with isoform CLSTN3beta of CLSTN3; inhibiting the lipid transferase activity of CIDEA. As to expression, highly expressed in brown adipose tissue and, at lower levels, in white adipose tissue (at protein level). Undetectable in undifferentiated preadipocytes. Expressed in mammary gland during pregnancy and lactation, in epithelial cells, but not in the surrounding adipose tissue. Secreted into milk via milk fat globules.

It localises to the lipid droplet. Its subcellular location is the nucleus. It carries out the reaction a triacyl-sn-glycerol(in) = a triacyl-sn-glycerol(out). Functionally, lipid transferase that promotes unilocular lipid droplet formation by mediating lipid droplet fusion. Lipid droplet fusion promotes their enlargement, restricting lipolysis and favoring lipid storage. Localizes on the lipid droplet surface, at focal contact sites between lipid droplets, and mediates atypical lipid droplet fusion by promoting directional net neutral lipid transfer from the smaller to larger lipid droplets. The transfer direction may be driven by the internal pressure difference between the contacting lipid droplet pair and occurs at a lower rate than that promoted by CIDEC. May also act as a CEBPB coactivator in epithelial cells to control the expression of a subset of CEBPB downstream target genes, including ID2, IGF1, PRLR, SOCS1, SOCS3, XDH, but not casein. By interacting with CEBPB, strengthens the association of CEBPB with the XDH promoter, increases histone acetylation and dissociates HDAC1 from the promoter. When overexpressed, induces apoptosis; the physiological significance of its role in apoptosis is unclear. The chain is Lipid transferase CIDEA from Mus musculus (Mouse).